Reading from the N-terminus, the 1404-residue chain is DNA-directed RNA polymerase subunit beta' (1404 aa).

Cys-70, Cys-72, Cys-85, and Cys-88 together coordinate Zn(2+). Residues Asp-460, Asp-462, and Asp-464 each coordinate Mg(2+). Residues Cys-814, Cys-888, Cys-895, and Cys-898 each coordinate Zn(2+).

Belongs to the RNA polymerase beta' chain family. The RNAP catalytic core consists of 2 alpha, 1 beta, 1 beta' and 1 omega subunit. When a sigma factor is associated with the core the holoenzyme is formed, which can initiate transcription. The cofactor is Mg(2+). Requires Zn(2+) as cofactor.

It catalyses the reaction RNA(n) + a ribonucleoside 5'-triphosphate = RNA(n+1) + diphosphate. In terms of biological role, DNA-dependent RNA polymerase catalyzes the transcription of DNA into RNA using the four ribonucleoside triphosphates as substrates. This Shewanella piezotolerans (strain WP3 / JCM 13877) protein is DNA-directed RNA polymerase subunit beta'.